The following is an 824-amino-acid chain: MFSWSYLMGLVMVATATLSLARPSYNIAEDTTLEPEEPPTKYQISQPDVHSALPGESVELRCLLGDAIMVTWTKDGAQLVSNNRTLLIGPYLQIREAAPRDSGLYACGATRPLQSETRYFIVNITDGNSSGDDEDDNDGSEDFTNDNNHKRAPYWTNTEKLEKKLHAVPAANTVKFRCPAGGNPLPSMRWLKNGKEFKQEHRIGGFKVRSQHWSLIMESVVPSDKGNYTCIMENEYGSINHTYHLDVVERSPHPPILQAGLPANTTTKVGGDREFVCKVYSDAQPHIQWRHIELNGSKIGPDGNPYLKVLKAAGGNTTVKEIEVLYVRNVSFEDAGEYTCLAGNSIGISYHSAWLTVLPDEERQLDSSSSEYTEIAIYCVGGFLIACMIGTIMMCHMKGRGKKSDFSSQPAVHKLSKRLPLRRQVTVSADSSSSMNSNTPLVRITTRLLSNTDTHLLAGVSEYELPEDPKWEYPRDKLTLGKPLGEGCFGQVVMAEAVGIDKDRPKDAVTVAVKMLKDDATEKDLSDLVSEMEMMKMIGKHKNIINLLGACTQDGPLYVIVEYASKGNLREYLRTRRPPGMEYSFDIFRIPEEQMTFKDLVSCTYQLARGMEYLASQKCIHRDLAARNVLVTETNVIKIADFGLARDINNIDYYKKTTNGRLPVKWMAPEALFDRVYTLQSDVWSFGVLMWEIFTLGGSPYPGIPVEELFKLLKEGHRMVKPGNCTNELYTMMTDCWRAVPSQRPTFKQLVEDLDRILTQTTNEEYLDLNNPLEPYSPSYPDTRSSCSFGDDSVFSPDPMSMNLAFPNPNTQMAPLKHEATQPA.

Residues 1–21 (MFSWSYLMGLVMVATATLSLA) form the signal peptide. Residues 22-374 (RPSYNIAEDT…LDSSSSEYTE (353 aa)) lie on the Extracellular side of the membrane. Residues 25–125 (YNIAEDTTLE…ETRYFIVNIT (101 aa)) enclose the Ig-like C2-type 1 domain. Cysteines 62 and 107 form a disulfide. 3 N-linked (GlcNAc...) asparagine glycosylation sites follow: asparagine 83, asparagine 123, and asparagine 128. The interval 125–152 (TDGNSSGDDEDDNDGSEDFTNDNNHKRA) is disordered. Positions 131–144 (GDDEDDNDGSEDFT) are enriched in acidic residues. Ig-like C2-type domains follow at residues 153–246 (PYWT…YHLD) and 254–356 (PPIL…AWLT). The tract at residues 160–177 (KLEKKLHAVPAANTVKFR) is heparin-binding. The cysteines at positions 178 and 230 are disulfide-linked. N-linked (GlcNAc...) asparagine glycans are attached at residues asparagine 227, asparagine 240, asparagine 264, asparagine 295, asparagine 316, and asparagine 329. A disulfide bridge connects residues cysteine 277 and cysteine 340. Residues 375-395 (IAIYCVGGFLIACMIGTIMMC) traverse the membrane as a helical segment. Residues 396–824 (HMKGRGKKSD…PLKHEATQPA (429 aa)) lie on the Cytoplasmic side of the membrane. Tyrosine 463 is modified (phosphotyrosine; by autocatalysis). In terms of domain architecture, Protein kinase spans 478 to 767 (LTLGKPLGEG…LTQTTNEEYL (290 aa)). ATP is bound by residues 484–492 (LGEGCFGQV), lysine 514, 562–564 (EYA), and asparagine 568. Tyrosine 583 carries the post-translational modification Phosphotyrosine; by autocatalysis. Aspartate 623 acts as the Proton acceptor in catalysis. A phosphotyrosine; by autocatalysis mark is found at tyrosine 653, tyrosine 654, and tyrosine 766. Residues 801 to 824 (SMNLAFPNPNTQMAPLKHEATQPA) are disordered.

It belongs to the protein kinase superfamily. Tyr protein kinase family. Fibroblast growth factor receptor subfamily. As to quaternary structure, monomer. Homodimer after ligand binding. Post-translationally, autophosphorylated. Binding of FGF family members together with heparan sulfate proteoglycan or heparin promotes receptor dimerization and autophosphorylation on tyrosine residues. Autophosphorylation occurs in trans between the two FGFR molecules present in the dimer. N-glycosylated in the endoplasmic reticulum. The N-glycan chains undergo further maturation to an Endo H-resistant form in the Golgi apparatus. In terms of processing, ubiquitinated. FGFR2 is rapidly ubiquitinated after autophosphorylation, leading to internalization and degradation. Subject to degradation both in lysosomes and by the proteasome.

The protein localises to the cell membrane. The protein resides in the golgi apparatus. It localises to the cytoplasmic vesicle. It carries out the reaction L-tyrosyl-[protein] + ATP = O-phospho-L-tyrosyl-[protein] + ADP + H(+). With respect to regulation, present in an inactive conformation in the absence of bound ligand. Ligand binding leads to dimerization and activation by autophosphorylation on tyrosine residues. Functionally, tyrosine-protein kinase that acts as a cell-surface receptor for fibroblast growth factors and plays an essential role in the regulation of cell proliferation, differentiation, migration and apoptosis, and in the regulation of embryonic development. Required for normal embryonic patterning, limb bud development, lung morphogenesis, osteogenesis and skin development. Plays an essential role in the regulation of osteoblast differentiation, proliferation and apoptosis, and is required for normal skeleton development. Promotes cell proliferation in keratinocytes and immature osteoblasts, but promotes apoptosis in differentiated osteoblasts. Phosphorylates PLCG1, FRS2 and PAK4. Ligand binding leads to the activation of several signaling cascades. Activation of PLCG1 leads to the production of the cellular signaling molecules diacylglycerol and inositol 1,4,5-trisphosphate. Phosphorylation of FRS2 triggers recruitment of GRB2, GAB1, PIK3R1 and SOS1, and mediates activation of RAS, MAPK1/ERK2, MAPK3/ERK1 and the MAP kinase signaling pathway, as well as of the AKT1 signaling pathway. FGFR2 signaling is down-regulated by ubiquitination, internalization and degradation. Mutations that lead to constitutive kinase activation or impair normal FGFR2 maturation, internalization and degradation lead to aberrant signaling. Over-expressed FGFR2 promotes activation of STAT1. In Pleurodeles waltl (Iberian ribbed newt), this protein is Fibroblast growth factor receptor 2 (FGFR2).